A 223-amino-acid chain; its full sequence is Histone H1.5 (223 aa).

The span at 1–14 (MSETAPAETAAPAP) shows a compositional bias: low complexity. Positions 1 to 56 (MSETAPAETAAPAPVEKSPAKKKTTKKAGAAKRKATGPPVSELITKAVSASKERGG) are disordered. Serine 2 is modified (N-acetylserine). Serine 2 is modified (phosphoserine). Lysine 17 carries the post-translational modification N6-acetyllysine. At serine 18 the chain carries Phosphoserine. Residues 20-35 (AKKKTTKKAGAAKRKA) show a composition bias toward basic residues. An N6-methyllysine modification is found at lysine 27. Lysine 34 is subject to N6-(beta-hydroxybutyryl)lysine; alternate. N6-succinyllysine; alternate is present on lysine 34. Threonine 36 carries the post-translational modification Phosphothreonine. One can recognise an H15 domain in the interval 36 to 109 (TGPPVSELIT…GASGSFKLNK (74 aa)). Lysine 46 carries the N6-acetyllysine modification. Lysine 52 is subject to N6-(beta-hydroxybutyryl)lysine. Citrulline is present on arginine 54. Lysine 64 is subject to N6-(beta-hydroxybutyryl)lysine. Lysine 75 carries the N6-acetyllysine modification. An N6-(beta-hydroxybutyryl)lysine mark is found at lysine 85, lysine 90, and lysine 106. Residues 91-223 (GTLVQTKGTG…KAKKAVSKKK (133 aa)) are disordered. Positions 119–130 (KAKKTGAAKAKK) are enriched in basic residues. Threonine 135 and threonine 152 each carry phosphothreonine. Basic residues predominate over residues 137 to 158 (KKPKKTAGAKKTVKKTPKKAKK). The residue at position 165 (lysine 165) is an N6-acetyllysine. The segment covering 166-184 (KVAKSPKKAKAAAKPKKAA) has biased composition (basic residues). Serine 170 and serine 186 each carry phosphoserine. Over residues 191-223 (KAVKSKASKPKVTKPKTAKPKAAKAKKAVSKKK) the composition is skewed to basic residues.

The protein belongs to the histone H1/H5 family. Interacts with MSX1. In terms of processing, H1 histones are progressively phosphorylated during the cell cycle, becoming maximally phosphorylated during late G2 phase and M phase, and being dephosphorylated sharply thereafter. Citrullination at Arg-54 (H1R54ci) by PADI4 takes place within the DNA-binding site of H1 and results in its displacement from chromatin and global chromatin decondensation, thereby promoting pluripotency and stem cell maintenance. Post-translationally, hydroxybutyrylation of histones is induced by starvation.

Its subcellular location is the nucleus. It localises to the chromosome. In terms of biological role, histone H1 protein binds to linker DNA between nucleosomes forming the macromolecular structure known as the chromatin fiber. Histones H1 are necessary for the condensation of nucleosome chains into higher-order structured fibers. Also acts as a regulator of individual gene transcription through chromatin remodeling, nucleosome spacing and DNA methylation. The polypeptide is Histone H1.5 (H1-5) (Mus musculus (Mouse)).